A 125-amino-acid chain; its full sequence is Fluoride-specific ion channel FluC (125 aa).

Helical transmembrane passes span methionine 1 to valine 21, alanine 32 to alanine 52, leucine 68 to isoleucine 88, and isoleucine 101 to methionine 121. 2 residues coordinate Na(+): glycine 75 and threonine 78.

The protein belongs to the fluoride channel Fluc/FEX (TC 1.A.43) family.

It is found in the cell inner membrane. The enzyme catalyses fluoride(in) = fluoride(out). With respect to regulation, na(+) is not transported, but it plays an essential structural role and its presence is essential for fluoride channel function. Its function is as follows. Fluoride-specific ion channel. Important for reducing fluoride concentration in the cell, thus reducing its toxicity. The polypeptide is Fluoride-specific ion channel FluC (Rhizobium johnstonii (strain DSM 114642 / LMG 32736 / 3841) (Rhizobium leguminosarum bv. viciae)).